The chain runs to 70 residues: DNA-directed RNA polymerase subunit omega (70 aa).

The protein belongs to the RNA polymerase subunit omega family. The RNAP catalytic core consists of 2 alpha, 1 beta, 1 beta' and 1 omega subunit. When a sigma factor is associated with the core the holoenzyme is formed, which can initiate transcription.

The enzyme catalyses RNA(n) + a ribonucleoside 5'-triphosphate = RNA(n+1) + diphosphate. Promotes RNA polymerase assembly. Latches the N- and C-terminal regions of the beta' subunit thereby facilitating its interaction with the beta and alpha subunits. This Clostridium perfringens (strain ATCC 13124 / DSM 756 / JCM 1290 / NCIMB 6125 / NCTC 8237 / Type A) protein is DNA-directed RNA polymerase subunit omega.